The sequence spans 800 residues: Cation/H(+) antiporter 19 (800 aa).

12 helical membrane passes run 30-50, 60-77, 92-112, 127-147, 158-178, 196-216, 224-244, 278-298, 315-335, 343-363, 375-395, and 408-428; these read FALP…RLLA, RVIA…SALG, LTVL…LVGL, LLIA…TSFV, QLPF…PVLA, MSAA…AIAL, LVSV…VVAI, FVTD…GIVA, LVSG…TDVT, WGLL…GTVG, AVTL…VLNI, and AILV…VMLI. The segment at 776-800 is disordered; that stretch reads ADTRPLVEEDAEYDQSSRDISDLTA. The span at 790 to 800 shows a compositional bias: basic and acidic residues; it reads QSSRDISDLTA.

It belongs to the monovalent cation:proton antiporter 2 (CPA2) transporter (TC 2.A.37) family. CHX (TC 2.A.37.4) subfamily. Expressed in the whole plant but preferentially in pollen.

Its subcellular location is the membrane. Functionally, may operate as a cation/H(+) antiporter. The sequence is that of Cation/H(+) antiporter 19 (CHX19) from Arabidopsis thaliana (Mouse-ear cress).